The primary structure comprises 288 residues: ATP synthase gamma chain 1 (288 aa).

Belongs to the ATPase gamma chain family. F-type ATPases have 2 components, CF(1) - the catalytic core - and CF(0) - the membrane proton channel. CF(1) has five subunits: alpha(3), beta(3), gamma(1), delta(1), epsilon(1). CF(0) has three main subunits: a, b and c.

It localises to the cell inner membrane. In terms of biological role, produces ATP from ADP in the presence of a proton gradient across the membrane. The gamma chain is believed to be important in regulating ATPase activity and the flow of protons through the CF(0) complex. The sequence is that of ATP synthase gamma chain 1 from Photobacterium profundum (strain SS9).